A 203-amino-acid polypeptide reads, in one-letter code: Ponticulin-like protein H (203 aa).

An N-terminal signal peptide occupies residues 1 to 20 (MKLLNSLVLLAALCAITANG). An N-linked (GlcNAc...) asparagine glycan is attached at N58. A compositionally biased stretch (low complexity) spans 127–168 (SDSTNPTSTPSTTPSATPTVTPSTTPTVTPTVTPSTTPTVAP). Residues 127–183 (SDSTNPTSTPSTTPSATPTVTPSTTPTVTPTVTPSTTPTVAPTVPPTTPPSTTTGSG) form a disordered region. S182 is lipidated: GPI-like-anchor amidated serine. A propeptide spans 183–203 (GSTVVASFGLIVSILLASLAL) (removed in mature form).

It belongs to the ponticulin family. In terms of processing, the GPI-like-anchor contains a phosphoceramide group, rather than a phosphatidyl group.

The protein localises to the cell membrane. Binds F-actin and nucleates actin assembly. The sequence is that of Ponticulin-like protein H (ponH) from Dictyostelium discoideum (Social amoeba).